Reading from the N-terminus, the 734-residue chain is Transcription factor EMB1444 (734 aa).

The interval 537-566 (QFPTSLEIPKKNKKRAKPGESSRPRPRDRQ) is disordered. The short motif at 548–555 (NKKRAKPG) is the Nuclear localization signal element. The 50-residue stretch at 552-601 (AKPGESSRPRPRDRQLIQDRIKELRELVPNGSKCSIDSLLECTIKHMLFL) folds into the bHLH domain. Residues 553–566 (KPGESSRPRPRDRQ) are compositionally biased toward basic and acidic residues.

The protein belongs to the bHLH protein family. LHW subfamily. Homodimer.

The protein localises to the nucleus. In terms of biological role, transcription factor that may regulate root development. This is Transcription factor EMB1444 from Arabidopsis thaliana (Mouse-ear cress).